The primary structure comprises 359 residues: tRNA N6-adenosine threonylcarbamoyltransferase (359 aa).

His-115 and His-119 together coordinate Fe cation. Residues 137–141 (LVSGG), Asp-170, Gly-183, and Asn-283 contribute to the substrate site. Asp-311 lines the Fe cation pocket. The segment at 328 to 359 (APDSLDLAPRSRWPLDEKSAPLIGTGRRGAKA) is disordered.

Belongs to the KAE1 / TsaD family. Fe(2+) serves as cofactor.

It is found in the cytoplasm. The enzyme catalyses L-threonylcarbamoyladenylate + adenosine(37) in tRNA = N(6)-L-threonylcarbamoyladenosine(37) in tRNA + AMP + H(+). Its function is as follows. Required for the formation of a threonylcarbamoyl group on adenosine at position 37 (t(6)A37) in tRNAs that read codons beginning with adenine. Is involved in the transfer of the threonylcarbamoyl moiety of threonylcarbamoyl-AMP (TC-AMP) to the N6 group of A37, together with TsaE and TsaB. TsaD likely plays a direct catalytic role in this reaction. In Brucella anthropi (strain ATCC 49188 / DSM 6882 / CCUG 24695 / JCM 21032 / LMG 3331 / NBRC 15819 / NCTC 12168 / Alc 37) (Ochrobactrum anthropi), this protein is tRNA N6-adenosine threonylcarbamoyltransferase.